Consider the following 380-residue polypeptide: O-phospho-L-seryl-tRNA:Cys-tRNA synthase (380 aa).

Pyridoxal 5'-phosphate contacts are provided by residues 86 to 87 (AR), N192, and 215 to 217 (SGH). Residue K218 is modified to N6-(pyridoxal phosphate)lysine.

It belongs to the SepCysS family. In terms of assembly, homodimer. Interacts with SepRS. Pyridoxal 5'-phosphate serves as cofactor.

It carries out the reaction O-phospho-L-seryl-tRNA(Cys) + hydrogen sulfide + H(+) = L-cysteinyl-tRNA(Cys) + phosphate. Converts O-phospho-L-seryl-tRNA(Cys) (Sep-tRNA(Cys)) to L-cysteinyl-tRNA(Cys) (Cys-tRNA(Cys)). The polypeptide is O-phospho-L-seryl-tRNA:Cys-tRNA synthase (Methanococcus maripaludis (strain C6 / ATCC BAA-1332)).